We begin with the raw amino-acid sequence, 546 residues long: Chaperonin GroEL (546 aa).

ATP is bound by residues 30–33 (TLGP), Lys51, 87–91 (DGTTT), Gly415, and Asp497. Positions 527 to 546 (PKKDSPAPAMPGGGMGGMDF) are disordered. Positions 537 to 546 (PGGGMGGMDF) are enriched in gly residues.

It belongs to the chaperonin (HSP60) family. As to quaternary structure, forms a cylinder of 14 subunits composed of two heptameric rings stacked back-to-back. Interacts with the co-chaperonin GroES.

Its subcellular location is the cytoplasm. It catalyses the reaction ATP + H2O + a folded polypeptide = ADP + phosphate + an unfolded polypeptide.. Together with its co-chaperonin GroES, plays an essential role in assisting protein folding. The GroEL-GroES system forms a nano-cage that allows encapsulation of the non-native substrate proteins and provides a physical environment optimized to promote and accelerate protein folding. The chain is Chaperonin GroEL from Methylobacterium radiotolerans (strain ATCC 27329 / DSM 1819 / JCM 2831 / NBRC 15690 / NCIMB 10815 / 0-1).